The chain runs to 236 residues: Pyridoxine 5'-phosphate synthase (236 aa).

Asparagine 6 is a binding site for 3-amino-2-oxopropyl phosphate. 8 to 9 (DH) serves as a coordination point for 1-deoxy-D-xylulose 5-phosphate. Arginine 17 contacts 3-amino-2-oxopropyl phosphate. Histidine 42 (proton acceptor) is an active-site residue. 1-deoxy-D-xylulose 5-phosphate-binding residues include arginine 44 and histidine 49. Catalysis depends on glutamate 69, which acts as the Proton acceptor. Residue threonine 99 participates in 1-deoxy-D-xylulose 5-phosphate binding. Catalysis depends on histidine 190, which acts as the Proton donor. Residues glycine 191 and 212–213 (GH) contribute to the 3-amino-2-oxopropyl phosphate site.

The protein belongs to the PNP synthase family. In terms of assembly, homooctamer; tetramer of dimers.

It localises to the cytoplasm. It carries out the reaction 3-amino-2-oxopropyl phosphate + 1-deoxy-D-xylulose 5-phosphate = pyridoxine 5'-phosphate + phosphate + 2 H2O + H(+). It functions in the pathway cofactor biosynthesis; pyridoxine 5'-phosphate biosynthesis; pyridoxine 5'-phosphate from D-erythrose 4-phosphate: step 5/5. In terms of biological role, catalyzes the complicated ring closure reaction between the two acyclic compounds 1-deoxy-D-xylulose-5-phosphate (DXP) and 3-amino-2-oxopropyl phosphate (1-amino-acetone-3-phosphate or AAP) to form pyridoxine 5'-phosphate (PNP) and inorganic phosphate. The protein is Pyridoxine 5'-phosphate synthase of Chloroherpeton thalassium (strain ATCC 35110 / GB-78).